Consider the following 339-residue polypeptide: Anthranilate phosphoribosyltransferase (339 aa).

5-phospho-alpha-D-ribose 1-diphosphate contacts are provided by residues glycine 81, 84–85, serine 89, 91–94, 109–117, and alanine 121; these read GD, NVST, and KHGNRALSS. Residue glycine 81 coordinates anthranilate. Serine 93 contacts Mg(2+). Anthranilate is bound at residue asparagine 112. Arginine 167 contacts anthranilate. Mg(2+) contacts are provided by aspartate 226 and glutamate 227.

The protein belongs to the anthranilate phosphoribosyltransferase family. As to quaternary structure, homodimer. Mg(2+) serves as cofactor.

It catalyses the reaction N-(5-phospho-beta-D-ribosyl)anthranilate + diphosphate = 5-phospho-alpha-D-ribose 1-diphosphate + anthranilate. The protein operates within amino-acid biosynthesis; L-tryptophan biosynthesis; L-tryptophan from chorismate: step 2/5. In terms of biological role, catalyzes the transfer of the phosphoribosyl group of 5-phosphorylribose-1-pyrophosphate (PRPP) to anthranilate to yield N-(5'-phosphoribosyl)-anthranilate (PRA). The protein is Anthranilate phosphoribosyltransferase of Rhodopseudomonas palustris (strain BisA53).